The sequence spans 99 residues: Putative pterin-4-alpha-carbinolamine dehydratase (99 aa).

It belongs to the pterin-4-alpha-carbinolamine dehydratase family.

The enzyme catalyses (4aS,6R)-4a-hydroxy-L-erythro-5,6,7,8-tetrahydrobiopterin = (6R)-L-erythro-6,7-dihydrobiopterin + H2O. In Bradyrhizobium sp. (strain BTAi1 / ATCC BAA-1182), this protein is Putative pterin-4-alpha-carbinolamine dehydratase.